We begin with the raw amino-acid sequence, 1325 residues long: Lysine-specific demethylase 3A (1325 aa).

Disordered stretches follow at residues 249 to 284 (SKRI…QGHV), 300 to 333 (PANK…RRSV), and 372 to 399 (QNGK…TGLK). Residues 274–283 (SPEVSQSQGH) show a composition bias toward polar residues. The segment covering 378–390 (SLISSRSSSLSDS) has biased composition (low complexity). The C6-type zinc finger occupies 669 to 694 (CDVCDTTIFNLRWVCSKCGFGVCVDC). 2 disordered regions span residues 772-791 (TLKE…SLQQ) and 798-819 (PQLP…TASV). The LXXLL motif motif lies at 888 to 892 (LRNLL). Positions 1062-1285 (MPSRFDDLMK…HCFWLTQEFR (224 aa)) constitute a JmjC domain. Fe cation is bound by residues His1124, Asp1126, and His1253.

This sequence belongs to the JHDM2 histone demethylase family. It depends on Fe(2+) as a cofactor.

The protein localises to the cytoplasm. Its subcellular location is the nucleus. The catalysed reaction is N(6),N(6)-dimethyl-L-lysyl(9)-[histone H3] + 2 2-oxoglutarate + 2 O2 = L-lysyl(9)-[histone H3] + 2 formaldehyde + 2 succinate + 2 CO2. In terms of biological role, histone demethylase that specifically demethylates 'Lys-9' of histone H3, thereby playing a central role in histone code. Preferentially demethylates mono- and dimethylated H3 'Lys-9' residue, with a preference for dimethylated residue, while it has weak or no activity on trimethylated H3 'Lys-9'. Demethylation of Lys residue generates formaldehyde and succinate. The chain is Lysine-specific demethylase 3A (KDM3A) from Gallus gallus (Chicken).